Reading from the N-terminus, the 412-residue chain is Histone-lysine N-methyltransferase SUV39H1 (412 aa).

Positions 1-89 are interaction with SIRT1; sequence MAENLKGCSV…LKCVRILKQF (89 aa). The region spanning 43 to 101 is the Chromo domain; sequence FEVEYLCDYKKIREQEYYLVKWRGYPDSESTWEPRQNLKCVRILKQFHKDLERELLRRH. A Pre-SET domain is found at 179–240; the sequence is VGCECQDCLW…DCPNRVVQKG (62 aa). Zn(2+)-binding residues include C181, C183, C186, C194, C195, C222, C226, C228, and C232. Positions 243 to 366 constitute an SET domain; it reads YDLCIFRTDD…AGEELTFDYN (124 aa). Residue 254–256 participates in S-adenosyl-L-methionine binding; the sequence is RGW. Residues 255–377 are mediates interaction with MECOM; that stretch reads GWGVRTLEKI…QVDPVDMEST (123 aa). K266 is modified (N6-acetyllysine). S-adenosyl-L-methionine-binding positions include Y297 and 323–324; that span reads NH. C326 contacts Zn(2+). At S391 the chain carries Phosphoserine. Residues 396-412 form the Post-SET domain; the sequence is VRIECKCGTESCRKYLF. Residues C400, C402, and C407 each coordinate Zn(2+).

This sequence belongs to the class V-like SAM-binding methyltransferase superfamily. Histone-lysine methyltransferase family. Suvar3-9 subfamily. Interacts with H3 and H4 histones. Interacts with GFI1B, DNMT3B, CBX1, CBX4, CCAR2, MBD1, RUNX1, RUNX3, MYOD1, SMAD5 and RB1. Interacts with SBF1 through the SET domain. Interacts with HDAC1 and HDAC2 through the N-terminus and associates with the core histone deacetylase complex composed of HDAC1, HDAC2, RBBP4 and RBBP7. Component of the eNoSC complex, composed of SIRT1, SUV39H1 and RRP8. Interacts (via SET domain) with MECOM; enhances MECOM transcriptional repression activity. Interacts with LMNA; the interaction increases stability of SUV39H1. The large PER complex involved in the histone methylation is composed of at least PER2, CBX3, TRIM28, SUV39H1 and/or SUV39H2; CBX3 mediates the formation of the complex. In terms of assembly, (Microbial infection) Interacts with HTLV-1 Tax protein, leading to abrogate Tax transactivation of HTLV-1 LTR. In terms of processing, phosphorylated on serine residues, and to a lesser degree, on threonine residues. The phosphorylated form is stabilized by SBF1 and is less active in its transcriptional repressor function. Ubiquitinated by the DCX(DCAF13) E3 ubiquitin ligase complex, leading to its degradation. Post-translationally, acetylated at Lys-266, leading to inhibition of enzyme activity. SIRT1-mediated deacetylation relieves this inhibition. In terms of processing, (Microbial infection) A higher molecular weight form is also seen in M.bovis infected cells.

The protein localises to the nucleus. Its subcellular location is the nucleus lamina. It is found in the nucleoplasm. The protein resides in the chromosome. It localises to the centromere. The protein localises to the cytoplasmic vesicle. Its subcellular location is the phagosome lumen. It is found in the cell membrane. It carries out the reaction L-lysyl(9)-[histone H3] + 3 S-adenosyl-L-methionine = N(6),N(6),N(6)-trimethyl-L-lysyl(9)-[histone H3] + 3 S-adenosyl-L-homocysteine + 3 H(+). Inhibited by S-adenosyl-L-homocysteine. Negatively regulated by CCAR2. In terms of biological role, histone methyltransferase that specifically trimethylates 'Lys-9' of histone H3 using monomethylated H3 'Lys-9' as substrate. Also weakly methylates histone H1 (in vitro). H3 'Lys-9' trimethylation represents a specific tag for epigenetic transcriptional repression by recruiting HP1 (CBX1, CBX3 and/or CBX5) proteins to methylated histones. Mainly functions in heterochromatin regions, thereby playing a central role in the establishment of constitutive heterochromatin at pericentric and telomere regions. H3 'Lys-9' trimethylation is also required to direct DNA methylation at pericentric repeats. SUV39H1 is targeted to histone H3 via its interaction with RB1 and is involved in many processes, such as repression of MYOD1-stimulated differentiation, regulation of the control switch for exiting the cell cycle and entering differentiation, repression by the PML-RARA fusion protein, BMP-induced repression, repression of switch recombination to IgA and regulation of telomere length. Component of the eNoSC (energy-dependent nucleolar silencing) complex, a complex that mediates silencing of rDNA in response to intracellular energy status and acts by recruiting histone-modifying enzymes. The eNoSC complex is able to sense the energy status of cell: upon glucose starvation, elevation of NAD(+)/NADP(+) ratio activates SIRT1, leading to histone H3 deacetylation followed by dimethylation of H3 at 'Lys-9' (H3K9me2) by SUV39H1 and the formation of silent chromatin in the rDNA locus. Recruited by the large PER complex to the E-box elements of the circadian target genes such as PER2 itself or PER1, contributes to the conversion of local chromatin to a heterochromatin-like repressive state through H3 'Lys-9' trimethylation. (Microbial infection) Plays a role in defense against mycobacterial infections. Methylates M.tuberculosis HupB on 'Lys-140', probably methylates HupB of M.bovis also. Methylation has an inhibitory effect on mycobacterial growth in the host. Macrophages expressing about 60% SUV39H1 are slightly more susceptible to M.bovis or M.tuberculosis infection. Chaetocin (an inhibitor of this enzyme) increases macrophage survival of M.tuberculosis. This protein inhibits biofilm formation by M.tuberculosis via 'Lys-140' trimethylation. The protein is Histone-lysine N-methyltransferase SUV39H1 (SUV39H1) of Homo sapiens (Human).